The sequence spans 283 residues: Polyamine aminopropyltransferase (283 aa).

One can recognise a PABS domain in the interval 5 to 241 (NNWYIEHFER…GWWSVTMARK (237 aa)). Residue glutamine 35 participates in S-methyl-5'-thioadenosine binding. Residues histidine 66 and aspartate 90 each coordinate spermidine. Residues aspartate 110 and 141–142 (DG) each bind S-methyl-5'-thioadenosine. The Proton acceptor role is filled by aspartate 160. 160–163 (DSTD) is a binding site for spermidine. Proline 167 is a binding site for S-methyl-5'-thioadenosine.

It belongs to the spermidine/spermine synthase family. As to quaternary structure, homodimer or homotetramer.

Its subcellular location is the cytoplasm. It catalyses the reaction S-adenosyl 3-(methylsulfanyl)propylamine + putrescine = S-methyl-5'-thioadenosine + spermidine + H(+). The protein operates within amine and polyamine biosynthesis; spermidine biosynthesis; spermidine from putrescine: step 1/1. Catalyzes the irreversible transfer of a propylamine group from the amino donor S-adenosylmethioninamine (decarboxy-AdoMet) to putrescine (1,4-diaminobutane) to yield spermidine. This is Polyamine aminopropyltransferase from Stenotrophomonas maltophilia (strain K279a).